The primary structure comprises 20 residues: Unknown protein NF040 from 2D-PAGE (20 aa).

The TCTP domain occupies 1–20 (MKVYTDIFTRDEFLSDSYPM).

Belongs to the TCTP family.

The protein is Unknown protein NF040 from 2D-PAGE of Naegleria fowleri (Brain eating amoeba).